The primary structure comprises 316 residues: Transaldolase (316 aa).

Lys-132 functions as the Schiff-base intermediate with substrate in the catalytic mechanism.

It belongs to the transaldolase family. Type 1 subfamily.

It is found in the cytoplasm. The catalysed reaction is D-sedoheptulose 7-phosphate + D-glyceraldehyde 3-phosphate = D-erythrose 4-phosphate + beta-D-fructose 6-phosphate. The protein operates within carbohydrate degradation; pentose phosphate pathway; D-glyceraldehyde 3-phosphate and beta-D-fructose 6-phosphate from D-ribose 5-phosphate and D-xylulose 5-phosphate (non-oxidative stage): step 2/3. In terms of biological role, transaldolase is important for the balance of metabolites in the pentose-phosphate pathway. This is Transaldolase from Vibrio cholerae serotype O1 (strain ATCC 39315 / El Tor Inaba N16961).